A 127-amino-acid polypeptide reads, in one-letter code: Large ribosomal subunit protein uL18 (127 aa).

Positions 1 to 26 (MASTLTVRKSLSDRAKARARRQARGR) are disordered. Residues 17-26 (ARARRQARGR) show a composition bias toward basic residues.

This sequence belongs to the universal ribosomal protein uL18 family. Part of the 50S ribosomal subunit; part of the 5S rRNA/L5/L18/L25 subcomplex. Contacts the 5S and 23S rRNAs.

This is one of the proteins that bind and probably mediate the attachment of the 5S RNA into the large ribosomal subunit, where it forms part of the central protuberance. In Cutibacterium acnes (strain DSM 16379 / KPA171202) (Propionibacterium acnes), this protein is Large ribosomal subunit protein uL18.